The sequence spans 101 residues: uncharacterized protein (101 aa).

The signal sequence occupies residues 1–25 (MRKKRLLSRISFSSLFLLCGTLLSA). Residue Cys-26 is the site of N-palmitoyl cysteine attachment. The S-diacylglycerol cysteine moiety is linked to residue Cys-26.

This sequence belongs to the MG439/MG440 family.

The protein localises to the cell membrane. This is an uncharacterized protein from Mycoplasma pneumoniae (strain ATCC 29342 / M129 / Subtype 1) (Mycoplasmoides pneumoniae).